The chain runs to 167 residues: Peptidoglycan-binding-like protein (167 aa).

Positions 1–24 are cleaved as a signal peptide; the sequence is MRSPKVKFLTIFTLSILITKMSFA.

It belongs to the IagB/IpgF/P19 family.

It localises to the periplasm. This Escherichia coli O157:H7 protein is Peptidoglycan-binding-like protein (pbl).